Here is a 202-residue protein sequence, read N- to C-terminus: V-type ATP synthase subunit D (202 aa).

This sequence belongs to the V-ATPase D subunit family.

Functionally, produces ATP from ADP in the presence of a proton gradient across the membrane. This chain is V-type ATP synthase subunit D (atpD), found in Borreliella burgdorferi (strain ATCC 35210 / DSM 4680 / CIP 102532 / B31) (Borrelia burgdorferi).